Here is a 619-residue protein sequence, read N- to C-terminus: Dihydroxy-acid dehydratase (619 aa).

A Mg(2+)-binding site is contributed by Asp-81. Residue Cys-122 participates in [2Fe-2S] cluster binding. The Mg(2+) site is built by Asp-123 and Lys-124. Residue Lys-124 is modified to N6-carboxylysine. Cys-195 serves as a coordination point for [2Fe-2S] cluster. Mg(2+) is bound at residue Glu-494. Ser-520 serves as the catalytic Proton acceptor.

The protein belongs to the IlvD/Edd family. Homodimer. [2Fe-2S] cluster serves as cofactor. It depends on Mg(2+) as a cofactor.

It catalyses the reaction (2R)-2,3-dihydroxy-3-methylbutanoate = 3-methyl-2-oxobutanoate + H2O. The catalysed reaction is (2R,3R)-2,3-dihydroxy-3-methylpentanoate = (S)-3-methyl-2-oxopentanoate + H2O. Its pathway is amino-acid biosynthesis; L-isoleucine biosynthesis; L-isoleucine from 2-oxobutanoate: step 3/4. It participates in amino-acid biosynthesis; L-valine biosynthesis; L-valine from pyruvate: step 3/4. In terms of biological role, functions in the biosynthesis of branched-chain amino acids. Catalyzes the dehydration of (2R,3R)-2,3-dihydroxy-3-methylpentanoate (2,3-dihydroxy-3-methylvalerate) into 2-oxo-3-methylpentanoate (2-oxo-3-methylvalerate) and of (2R)-2,3-dihydroxy-3-methylbutanoate (2,3-dihydroxyisovalerate) into 2-oxo-3-methylbutanoate (2-oxoisovalerate), the penultimate precursor to L-isoleucine and L-valine, respectively. The chain is Dihydroxy-acid dehydratase from Shewanella sp. (strain MR-4).